The primary structure comprises 518 residues: Probable lysine--tRNA ligase, cytoplasmic (518 aa).

Belongs to the class-II aminoacyl-tRNA synthetase family. Homodimer.

The protein localises to the cytoplasm. The catalysed reaction is tRNA(Lys) + L-lysine + ATP = L-lysyl-tRNA(Lys) + AMP + diphosphate. This is Probable lysine--tRNA ligase, cytoplasmic from Enterocytozoon bieneusi (strain H348) (Microsporidian parasite).